The chain runs to 390 residues: Acid protease (390 aa).

Residues 1–18 (MLFSKSLLLSVLASLSFA) form the signal peptide. In terms of domain architecture, Peptidase A1 spans 75-386 (YLTTIEIGTP…DIDNSQVGIA (312 aa)). Active-site residues include Asp-93 and Asp-282.

It belongs to the peptidase A1 family.

The polypeptide is Acid protease (PEP1) (Saccharomycopsis fibuligera (Yeast)).